A 545-amino-acid polypeptide reads, in one-letter code: Glucose-6-phosphate isomerase (545 aa).

E351 (proton donor) is an active-site residue. Catalysis depends on residues H382 and K510.

The protein belongs to the GPI family.

It is found in the cytoplasm. It catalyses the reaction alpha-D-glucose 6-phosphate = beta-D-fructose 6-phosphate. The protein operates within carbohydrate biosynthesis; gluconeogenesis. Its pathway is carbohydrate degradation; glycolysis; D-glyceraldehyde 3-phosphate and glycerone phosphate from D-glucose: step 2/4. Its function is as follows. Catalyzes the reversible isomerization of glucose-6-phosphate to fructose-6-phosphate. In Shewanella denitrificans (strain OS217 / ATCC BAA-1090 / DSM 15013), this protein is Glucose-6-phosphate isomerase.